The chain runs to 555 residues: Glutamine--tRNA ligase (555 aa).

A 'HIGH' region motif is present at residues 34–44 (PEPNGFLHIGH). Residues 35-37 (EPN) and 41-47 (HIGHAKS) contribute to the ATP site. Positions 67 and 212 each coordinate L-glutamine. Residues T231, 261 to 262 (RL), and 269 to 271 (LSK) contribute to the ATP site. Residues 268-272 (VLSKR) carry the 'KMSKS' region motif.

Belongs to the class-I aminoacyl-tRNA synthetase family. Monomer.

Its subcellular location is the cytoplasm. The enzyme catalyses tRNA(Gln) + L-glutamine + ATP = L-glutaminyl-tRNA(Gln) + AMP + diphosphate. The protein is Glutamine--tRNA ligase of Alteromonas mediterranea (strain DSM 17117 / CIP 110805 / LMG 28347 / Deep ecotype).